The following is a 156-amino-acid chain: NAD(P)H-quinone oxidoreductase subunit N (156 aa).

This sequence belongs to the complex I NdhN subunit family. In terms of assembly, NDH-1 can be composed of about 15 different subunits; different subcomplexes with different compositions have been identified which probably have different functions.

It is found in the cellular thylakoid membrane. It carries out the reaction a plastoquinone + NADH + (n+1) H(+)(in) = a plastoquinol + NAD(+) + n H(+)(out). It catalyses the reaction a plastoquinone + NADPH + (n+1) H(+)(in) = a plastoquinol + NADP(+) + n H(+)(out). Functionally, NDH-1 shuttles electrons from an unknown electron donor, via FMN and iron-sulfur (Fe-S) centers, to quinones in the respiratory and/or the photosynthetic chain. The immediate electron acceptor for the enzyme in this species is believed to be plastoquinone. Couples the redox reaction to proton translocation, and thus conserves the redox energy in a proton gradient. Cyanobacterial NDH-1 also plays a role in inorganic carbon-concentration. The chain is NAD(P)H-quinone oxidoreductase subunit N from Prochlorococcus marinus (strain MIT 9515).